The chain runs to 896 residues: Bifunctional glutamine synthetase adenylyltransferase/adenylyl-removing enzyme (896 aa).

An adenylyl removase region spans residues 1–411; it reads MSDNRLDTAR…LFNEILSEPE (411 aa). The interval 417–896 is adenylyl transferase; it reads NSEWQWAWQD…EVFGEEAATV (480 aa).

Belongs to the GlnE family. It depends on Mg(2+) as a cofactor.

It carries out the reaction [glutamine synthetase]-O(4)-(5'-adenylyl)-L-tyrosine + phosphate = [glutamine synthetase]-L-tyrosine + ADP. The catalysed reaction is [glutamine synthetase]-L-tyrosine + ATP = [glutamine synthetase]-O(4)-(5'-adenylyl)-L-tyrosine + diphosphate. Involved in the regulation of glutamine synthetase GlnA, a key enzyme in the process to assimilate ammonia. When cellular nitrogen levels are high, the C-terminal adenylyl transferase (AT) inactivates GlnA by covalent transfer of an adenylyl group from ATP to specific tyrosine residue of GlnA, thus reducing its activity. Conversely, when nitrogen levels are low, the N-terminal adenylyl removase (AR) activates GlnA by removing the adenylyl group by phosphorolysis, increasing its activity. The regulatory region of GlnE binds the signal transduction protein PII (GlnB) which indicates the nitrogen status of the cell. The chain is Bifunctional glutamine synthetase adenylyltransferase/adenylyl-removing enzyme from Neisseria meningitidis serogroup B (strain ATCC BAA-335 / MC58).